Reading from the N-terminus, the 391-residue chain is MAKNITDVSRDDLSKVSDEELQKCSKEELLRRLRKVDAEKMNLMLEHGNMMKDVNRRLQLHLHEIRSLKEVNQKLQEDNQELRELCCFLDDDRQKGKKLSREWQRFGRYTASVMWKEVGVFQQKLKELESNQDSVMRENLELKEIIIMLDDERNGAGSRSSIDSQSSLSNLNGGSATVRDVGDGSSTSSTGSAGSPDHHHSHIHKPTEGKITSIRRSMDDLSTNHLLRNIPNGLNDSSSNYIRQLETKVRILEDDNKQLLSQQGSVGDLKTLRKGLSLYHSESQLSSLSQFQDTLQNGSIRIAGGDLAPTVTGYLPAAQKPEAVVHAMKVLEVHENLDRKIPEDYEEDLSEKEKAIVREMCNVVWRKLGDAAGTKPSIRQHLSGNQFKGPL.

Coiled coils occupy residues 23–87 and 121–146; these read KCSK…ELCC and FQQKLKELESNQDSVMRENLELKEII. The disordered stretch occupies residues 154–212; that stretch reads NGAGSRSSIDSQSSLSNLNGGSATVRDVGDGSSTSSTGSAGSPDHHHSHIHKPTEGKIT. Composition is skewed to low complexity over residues 158–175 and 183–195; these read SRSSIDSQSSLSNLNGGS and DGSSTSSTGSAGS.

Belongs to the CCDC85 family.

Its subcellular location is the cell junction. It is found in the tight junction. It localises to the adherens junction. May play a role in cell-cell adhesion and epithelium development through its interaction with proteins of the beta-catenin family. May play an important role in cortical development, especially in the maintenance of radial glia. This Danio rerio (Zebrafish) protein is Coiled-coil domain-containing protein 85C-A (ccdc85ca).